A 331-amino-acid polypeptide reads, in one-letter code: Pseudouridylate synthase TRUB2, mitochondrial (331 aa).

Catalysis depends on Asp-98, which acts as the Nucleophile. The interval 309–331 (STGQPWGLKDPSSTLELESCSGQ) is disordered. A compositionally biased stretch (polar residues) spans 319–331 (PSSTLELESCSGQ).

This sequence belongs to the pseudouridine synthase TruB family. Forms a regulatory protein-RNA complex, consisting of RCC1L, NGRN, RPUSD3, RPUSD4, TRUB2, FASTKD2 and 16S mt-rRNA.

It localises to the mitochondrion matrix. It carries out the reaction a uridine in mRNA = a pseudouridine in mRNA. The enzyme catalyses uridine(55) in tRNA = pseudouridine(55) in tRNA. In terms of biological role, minor enzyme contributing to the isomerization of uridine to pseudouridine (pseudouridylation) of specific mitochondrial mRNAs (mt-mRNAs) such as COXI and COXIII mt-mRNAs. As a component of a functional protein-RNA module, consisting of RCC1L, NGRN, RPUSD3, RPUSD4, TRUB2, FASTKD2 and 16S mitochondrial ribosomal RNA (16S mt-rRNA), controls 16S mt-rRNA abundance and is required for intra-mitochondrial translation. Also catalyzes pseudouridylation of some tRNAs, including synthesis of pseudouridine(55) from uracil-55, in the psi GC loop of a subset of tRNAs. This Mus musculus (Mouse) protein is Pseudouridylate synthase TRUB2, mitochondrial.